Reading from the N-terminus, the 769-residue chain is Serine/threonine-protein kinase PLK4 (769 aa).

A Protein kinase domain is found at 14–267 (YEVQHLLGKG…LEAVLCHPFM (254 aa)). ATP-binding positions include 20-28 (LGKGGFATV) and lysine 43. Aspartate 138 functions as the Proton acceptor in the catalytic mechanism. A Cryptic POLO box 1 (CPB1) domain is found at 381 to 498 (EDRISVPPLN…ARFVGLVKSK (118 aa)). The region spanning 499–602 (TPKVTYFSTL…GRRPITDVQP (104 aa)) is the Cryptic POLO box 2 (CPB2) domain. Residues 660–739 (PIKRINVPDI…IPNIQLKLKT (80 aa)) enclose the POLO box domain.

Belongs to the protein kinase superfamily. Ser/Thr protein kinase family. CDC5/Polo subfamily. Homodimer. In terms of processing, ubiquitinated by the SCF(Slimb) ubiquitin ligase complex; leading to its degradation by the proteasome during interphase and regulating centriole number and ensuring the block to centriole reduplication.

It localises to the cytoplasm. It is found in the cytoskeleton. The protein localises to the microtubule organizing center. The protein resides in the centrosome. Its subcellular location is the centriole. The enzyme catalyses L-seryl-[protein] + ATP = O-phospho-L-seryl-[protein] + ADP + H(+). It catalyses the reaction L-threonyl-[protein] + ATP = O-phospho-L-threonyl-[protein] + ADP + H(+). Serine/threonine-protein kinase that plays a central role in centriole duplication. Able to trigger procentriole formation on the surface of the mother centriole cylinder, using mother centriole as a platform, leading to the recruitment of centriole biogenesis proteins such as sas-6. When overexpressed, it is able to induce centrosome amplification through the simultaneous generation of multiple procentrioles adjoining each parental centriole during S phase. Centrosome amplification following overexpression can initiate tumorigenesis, highlighting the importance of centrosome regulation in cancers. The polypeptide is Serine/threonine-protein kinase PLK4 (SAK) (Drosophila sechellia (Fruit fly)).